Consider the following 307-residue polypeptide: Metapyrocatechase (307 aa).

2 VOC domains span residues R7 to D122 and R150 to G269. Positions 153, 214, and 265 each coordinate Fe cation.

The protein belongs to the extradiol ring-cleavage dioxygenase family. In terms of assembly, homotetramer. It depends on Fe(2+) as a cofactor.

It catalyses the reaction catechol + O2 = (2Z,4E)-2-hydroxy-6-oxohexa-2,4-dienoate + H(+). It participates in xenobiotic degradation; toluene degradation. The chain is Metapyrocatechase (bztE) from Pseudomonas aeruginosa.